The following is a 365-amino-acid chain: Protein RecA (365 aa).

77–84 (GPESSGKT) contributes to the ATP binding site.

This sequence belongs to the RecA family.

It localises to the cytoplasm. In terms of biological role, can catalyze the hydrolysis of ATP in the presence of single-stranded DNA, the ATP-dependent uptake of single-stranded DNA by duplex DNA, and the ATP-dependent hybridization of homologous single-stranded DNAs. It interacts with LexA causing its activation and leading to its autocatalytic cleavage. The protein is Protein RecA of Mesorhizobium japonicum (strain LMG 29417 / CECT 9101 / MAFF 303099) (Mesorhizobium loti (strain MAFF 303099)).